The following is a 720-amino-acid chain: DNA ligase (720 aa).

NAD(+) contacts are provided by residues 57-61, 106-107, and glutamate 140; these read DAEYD and SL. Residue lysine 142 is the N6-AMP-lysine intermediate of the active site. Residues arginine 163, glutamate 200, lysine 316, and lysine 340 each coordinate NAD(+). Cysteine 434, cysteine 437, cysteine 458, and cysteine 464 together coordinate Zn(2+). The region spanning 643–720 is the BRCT domain; sequence AAASPVSGKT…TEDEWFELVG (78 aa).

It belongs to the NAD-dependent DNA ligase family. LigA subfamily. Mg(2+) is required as a cofactor. It depends on Mn(2+) as a cofactor.

It catalyses the reaction NAD(+) + (deoxyribonucleotide)n-3'-hydroxyl + 5'-phospho-(deoxyribonucleotide)m = (deoxyribonucleotide)n+m + AMP + beta-nicotinamide D-nucleotide.. DNA ligase that catalyzes the formation of phosphodiester linkages between 5'-phosphoryl and 3'-hydroxyl groups in double-stranded DNA using NAD as a coenzyme and as the energy source for the reaction. It is essential for DNA replication and repair of damaged DNA. This Xanthobacter autotrophicus (strain ATCC BAA-1158 / Py2) protein is DNA ligase.